The sequence spans 271 residues: Tryptophan synthase alpha chain (271 aa).

Active-site proton acceptor residues include glutamate 49 and aspartate 60.

Belongs to the TrpA family. Tetramer of two alpha and two beta chains.

It carries out the reaction (1S,2R)-1-C-(indol-3-yl)glycerol 3-phosphate + L-serine = D-glyceraldehyde 3-phosphate + L-tryptophan + H2O. It participates in amino-acid biosynthesis; L-tryptophan biosynthesis; L-tryptophan from chorismate: step 5/5. The alpha subunit is responsible for the aldol cleavage of indoleglycerol phosphate to indole and glyceraldehyde 3-phosphate. The chain is Tryptophan synthase alpha chain from Nitrosococcus oceani (strain ATCC 19707 / BCRC 17464 / JCM 30415 / NCIMB 11848 / C-107).